Reading from the N-terminus, the 184-residue chain is Helix-loop-helix protein ngn-1 (184 aa).

The tract at residues 1–55 (MYHHSPFYPHHLQTGEQDLDMERENDMDQNSKNSTQKPVKREKRRYRCRKRSPAT) is disordered. Positions 28-37 (DQNSKNSTQK) are enriched in polar residues. A compositionally biased stretch (basic residues) spans 38-52 (PVKREKRRYRCRKRS). The tract at residues 62–75 (VRRDKANARERRRM) is basic motif. One can recognise a bHLH domain in the interval 62–114 (VRRDKANARERRRMNSLNDALEHLRGILPALPDEPKMTKIETLRKAQEYIASL). The tract at residues 76–114 (NSLNDALEHLRGILPALPDEPKMTKIETLRKAQEYIASL) is helix-loop-helix motif. Residues 164–184 (SNPPSQMYYHHHHQSPSFPHH) form a disordered region. Residues 172–184 (YHHHHQSPSFPHH) show a composition bias toward basic residues.

Interacts with hlh-2; the interaction is direct.

The protein localises to the nucleus. Acts as a transcriptional regulator. Regulates expression of various genes, including homeobox protein unc-42 and helix-loop-helix protein hlh-34. Required for embryonic viability, neuromuscular development, organization of the nerve ring and neuronal cell body location. Regulates AIY neuron axon morphology and cell fate. Plays a role in cell autonomously establishing a neuronal left-right asymmetry. Involved in regulating glial specification. The sequence is that of Helix-loop-helix protein ngn-1 from Caenorhabditis elegans.